The sequence spans 279 residues: Proline-rich protein 23D1 (279 aa).

2 disordered regions span residues 1–60 and 247–270; these read MYGY…PHLN and LRPM…RPPS. Over residues 15-33 the composition is skewed to polar residues; it reads TEPQNDNEGETSLATTQMN.

Belongs to the PRR23 family.

This is Proline-rich protein 23D1 (PRR23D1) from Homo sapiens (Human).